The following is a 538-amino-acid chain: 2-isopropylmalate synthase (538 aa).

Positions leucine 6–aspartate 277 constitute a Pyruvate carboxyltransferase domain. The Mn(2+) site is built by aspartate 15, histidine 206, histidine 208, and asparagine 242. Residues arginine 406–leucine 538 are regulatory domain.

The protein belongs to the alpha-IPM synthase/homocitrate synthase family. LeuA type 1 subfamily. Homodimer. The cofactor is Mn(2+).

Its subcellular location is the cytoplasm. The catalysed reaction is 3-methyl-2-oxobutanoate + acetyl-CoA + H2O = (2S)-2-isopropylmalate + CoA + H(+). Its pathway is amino-acid biosynthesis; L-leucine biosynthesis; L-leucine from 3-methyl-2-oxobutanoate: step 1/4. Functionally, catalyzes the condensation of the acetyl group of acetyl-CoA with 3-methyl-2-oxobutanoate (2-ketoisovalerate) to form 3-carboxy-3-hydroxy-4-methylpentanoate (2-isopropylmalate). This chain is 2-isopropylmalate synthase, found in Gloeobacter violaceus (strain ATCC 29082 / PCC 7421).